The sequence spans 234 residues: UPF0173 metal-dependent hydrolase Rleg2_1519 (234 aa).

This sequence belongs to the UPF0173 family.

In Rhizobium leguminosarum bv. trifolii (strain WSM2304), this protein is UPF0173 metal-dependent hydrolase Rleg2_1519.